The primary structure comprises 555 residues: Energy-dependent translational throttle protein EttA (555 aa).

ABC transporter domains follow at residues 6–259 (YTMH…AQEA) and 324–550 (LEVS…RIKY). An ATP-binding site is contributed by 39-46 (GLNGAGKS). An arm region spans residues 95-139 (SEVVNALKRLDEVYALYADPDADFDKLAAEQGRLEEIIQAHDGHN). The ptIM stretch occupies residues 242–322 (GNYSSWLEQK…IPPGPRLGDK (81 aa)). ATP is bound at residue 356 to 363 (GPNGAGKS).

The protein belongs to the ABC transporter superfamily. ABCF family. Translational throttle EttA subfamily. Monomer. Probably contacts ribosomal proteins L1, L5, L33 and S7, the 16S and 23S rRNA and the P-site containing tRNA(fMet).

The protein resides in the cytoplasm. The catalysed reaction is ATP + H2O = ADP + phosphate + H(+). Its function is as follows. A translation factor that gates the progression of the 70S ribosomal initiation complex (IC, containing tRNA(fMet) in the P-site) into the translation elongation cycle by using a mechanism sensitive to the ATP/ADP ratio. Binds to the 70S ribosome E-site where it modulates the state of the translating ribosome during subunit translocation. ATP hydrolysis probably frees it from the ribosome, which can enter the elongation phase. The polypeptide is Energy-dependent translational throttle protein EttA (Escherichia coli O157:H7).